Reading from the N-terminus, the 226-residue chain is UPF0758 protein SPs0978 (226 aa).

Residues 103–225 form the MPN domain; sequence SVLTSVQVAE…YYSFREKSTL (123 aa). His174, His176, and Asp187 together coordinate Zn(2+). The JAMM motif motif lies at 174-187; the sequence is HNHPSGNIEPSSND.

Belongs to the UPF0758 family.

This chain is UPF0758 protein SPs0978, found in Streptococcus pyogenes serotype M3 (strain SSI-1).